We begin with the raw amino-acid sequence, 256 residues long: MDILGRFVRESKKMSPGLKTIMEKVLRGQSLNSFHSEELRFLHLVICKMYDFCLNVYILKESIINTGTRDNEVLSRKVPVEIWKIMYDACKSIGVENTMLIDDSSRGQLWLHLNSNIDLLQGMSQFIFSKLGIKHFVKISPQNITDGNYLFNLGSVLPYRLILILQFCLIFWGKEQEEAWVRFFTGKIFMLYLLITGHLLIQKTFILQAASTGYCGPLEIIGDDLRSYLGIHTYMTNDLQHIPSLDLLFIFNNNFY.

Belongs to the herpesviridae UL79 family.

The polypeptide is Gene 18 protein (18) (Saimiriine herpesvirus 2 (strain 11) (SaHV-2)).